The primary structure comprises 389 residues: Heat-inducible transcription repressor HrcA (389 aa).

This sequence belongs to the HrcA family.

Functionally, negative regulator of class I heat shock genes (grpE-dnaK-dnaJ and groELS operons). Prevents heat-shock induction of these operons. The chain is Heat-inducible transcription repressor HrcA from Synechococcus sp. (strain JA-2-3B'a(2-13)) (Cyanobacteria bacterium Yellowstone B-Prime).